We begin with the raw amino-acid sequence, 488 residues long: Ankyrin repeat domain-containing protein 13C (488 aa).

The interval 1 to 60 is disordered; sequence MTGEKIRSVRKERKSGLDLLEPDEEPAATGPAKHRGSKIFSGGNHRISRSSSSPGDPDGA. Positions 41–59 are enriched in low complexity; the sequence is SGGNHRISRSSSSPGDPDG. ANK repeat units follow at residues 58-87, 90-119, and 123-152; these read DGAY…IAQK, HGNT…PVKV, and QGWS…QQSR.

The protein localises to the endoplasmic reticulum membrane. Functionally, acts as a molecular chaperone for G protein-coupled receptors, regulating their biogenesis and exit from the ER. The chain is Ankyrin repeat domain-containing protein 13C (ankrd13c) from Danio rerio (Zebrafish).